Reading from the N-terminus, the 472-residue chain is Chitobiosyldiphosphodolichol beta-mannosyltransferase (472 aa).

Over 1–20 the chain is Lumenal; the sequence is MEEFQFIKYKGFDHVFKYSG. A helical transmembrane segment spans residues 21–41; it reads PWLWWLVGFYLCLPILAYTLL. Residues 42 to 118 are Cytoplasmic-facing; that stretch reads PYLTMNGTIS…PITVTKNTSN (77 aa). Positions 119 to 139 form an intramembrane region, helical; sequence LPFILFAAKKMVVQFFQLLKL. At 140–472 the chain is on the cytoplasmic side; the sequence is LSDFRGTDYV…MGKRFEYSTD (333 aa).

Belongs to the glycosyltransferase group 1 family.

The protein localises to the endoplasmic reticulum membrane. The catalysed reaction is an N,N'-diacetylchitobiosyl-diphospho-di-trans,poly-cis-dolichol + GDP-alpha-D-mannose = a beta-D-Man-(1-&gt;4)-beta-D-GlcNAc-(1-&gt;4)-alpha-D-GlcNAc-diphospho-di-trans,poly-cis-dolichol + GDP + H(+). Its pathway is protein modification; protein glycosylation. In terms of biological role, participates in the formation of the lipid-linked precursor oligosaccharide for N-glycosylation. Involved in assembling the dolichol-pyrophosphate-GlcNAc(2)-Man(5) intermediate on the cytoplasmic surface of the ER. The sequence is that of Chitobiosyldiphosphodolichol beta-mannosyltransferase (ALG1) from Debaryomyces hansenii (strain ATCC 36239 / CBS 767 / BCRC 21394 / JCM 1990 / NBRC 0083 / IGC 2968) (Yeast).